Consider the following 206-residue polypeptide: MDLTITTLEGKDAGKVKLNEEIFGLDPRDDILQRVVRWQLARRQQGSHKAQGRGDVSRTGSKMYKQKGTGRARHHSARAPQFRGGGQAHGPVVRNHDHDLPKKVRALGLRHALSAKAKASDLIIIDDLASADAKTKQLVSQFAKLGLENALLIGGAEIDANFQRAASNIPNIDVLPVQGINVYDILRRGKLVLSKAAVEALEERFK.

Residues 42 to 94 (RRQQGSHKAQGRGDVSRTGSKMYKQKGTGRARHHSARAPQFRGGGQAHGPVVR) form a disordered region. A compositionally biased stretch (basic residues) spans 64–77 (YKQKGTGRARHHSA).

The protein belongs to the universal ribosomal protein uL4 family. In terms of assembly, part of the 50S ribosomal subunit.

Functionally, one of the primary rRNA binding proteins, this protein initially binds near the 5'-end of the 23S rRNA. It is important during the early stages of 50S assembly. It makes multiple contacts with different domains of the 23S rRNA in the assembled 50S subunit and ribosome. Forms part of the polypeptide exit tunnel. The protein is Large ribosomal subunit protein uL4 of Brucella abortus biovar 1 (strain 9-941).